The sequence spans 138 residues: Large ribosomal subunit protein uL16 (138 aa).

Positions 1 to 17 are enriched in basic residues; sequence MLIPRKVKHRKQHHPRQ. Residues 1 to 22 form a disordered region; that stretch reads MLIPRKVKHRKQHHPRQRGIAS.

Belongs to the universal ribosomal protein uL16 family. As to quaternary structure, part of the 50S ribosomal subunit.

Functionally, binds 23S rRNA and is also seen to make contacts with the A and possibly P site tRNAs. The chain is Large ribosomal subunit protein uL16 from Mycobacterium leprae (strain Br4923).